The sequence spans 291 residues: Formamidopyrimidine-DNA glycosylase (291 aa).

P2 functions as the Schiff-base intermediate with DNA in the catalytic mechanism. Residue E3 is the Proton donor of the active site. The Proton donor; for beta-elimination activity role is filled by K58. 3 residues coordinate DNA: H100, R123, and K166. Residues 257-291 form an FPG-type zinc finger; sequence SVYGREGKECFQCGIPITRISQSGRSSFYCSQCQK. R281 functions as the Proton donor; for delta-elimination activity in the catalytic mechanism.

This sequence belongs to the FPG family. As to quaternary structure, monomer. The cofactor is Zn(2+).

The catalysed reaction is Hydrolysis of DNA containing ring-opened 7-methylguanine residues, releasing 2,6-diamino-4-hydroxy-5-(N-methyl)formamidopyrimidine.. It catalyses the reaction 2'-deoxyribonucleotide-(2'-deoxyribose 5'-phosphate)-2'-deoxyribonucleotide-DNA = a 3'-end 2'-deoxyribonucleotide-(2,3-dehydro-2,3-deoxyribose 5'-phosphate)-DNA + a 5'-end 5'-phospho-2'-deoxyribonucleoside-DNA + H(+). Involved in base excision repair of DNA damaged by oxidation or by mutagenic agents. Acts as a DNA glycosylase that recognizes and removes damaged bases. Has a preference for oxidized purines, such as 7,8-dihydro-8-oxoguanine (8-oxoG). Has AP (apurinic/apyrimidinic) lyase activity and introduces nicks in the DNA strand. Cleaves the DNA backbone by beta-delta elimination to generate a single-strand break at the site of the removed base with both 3'- and 5'-phosphates. This is Formamidopyrimidine-DNA glycosylase from Bartonella quintana (strain Toulouse) (Rochalimaea quintana).